Reading from the N-terminus, the 294-residue chain is ATP synthase gamma chain (294 aa).

This sequence belongs to the ATPase gamma chain family. As to quaternary structure, F-type ATPases have 2 components, CF(1) - the catalytic core - and CF(0) - the membrane proton channel. CF(1) has five subunits: alpha(3), beta(3), gamma(1), delta(1), epsilon(1). CF(0) has three main subunits: a, b and c.

It localises to the cell inner membrane. Its function is as follows. Produces ATP from ADP in the presence of a proton gradient across the membrane. The gamma chain is believed to be important in regulating ATPase activity and the flow of protons through the CF(0) complex. The chain is ATP synthase gamma chain from Nitrosomonas eutropha (strain DSM 101675 / C91 / Nm57).